The chain runs to 563 residues: Arginine--tRNA ligase (563 aa).

Positions 120–130 (PNIAKPFHIGH) match the 'HIGH' region motif.

This sequence belongs to the class-I aminoacyl-tRNA synthetase family. As to quaternary structure, monomer.

It is found in the cytoplasm. It carries out the reaction tRNA(Arg) + L-arginine + ATP = L-arginyl-tRNA(Arg) + AMP + diphosphate. In Clostridium botulinum (strain Langeland / NCTC 10281 / Type F), this protein is Arginine--tRNA ligase.